A 415-amino-acid polypeptide reads, in one-letter code: Serine/threonine transporter SstT (415 aa).

The next 8 helical transmembrane spans lie at 21–41 (ILLG…AALA), 45–65 (LGTL…LVLV), 85–105 (FLYL…SVLF), 142–162 (ALLN…GIAF), 193–213 (LGIF…ALWG), 217–237 (LLMV…PLIV), 289–309 (VAIP…ITVL), and 331–351 (VVAS…LLLI).

The protein belongs to the dicarboxylate/amino acid:cation symporter (DAACS) (TC 2.A.23) family.

It is found in the cell inner membrane. The catalysed reaction is L-serine(in) + Na(+)(in) = L-serine(out) + Na(+)(out). The enzyme catalyses L-threonine(in) + Na(+)(in) = L-threonine(out) + Na(+)(out). Involved in the import of serine and threonine into the cell, with the concomitant import of sodium (symport system). This Pectobacterium atrosepticum (strain SCRI 1043 / ATCC BAA-672) (Erwinia carotovora subsp. atroseptica) protein is Serine/threonine transporter SstT.